Reading from the N-terminus, the 119-residue chain is Ethylene-responsive proteinase inhibitor 1 (119 aa).

The first 27 residues, 1–27 (MEANKSMVKLVAFLIILVSSCFQSLTA), serve as a signal peptide directing secretion. The propeptide occupies 28 to 48 (QDLEIEVSDGLNVLQVHDVSQ).

This sequence belongs to the protease inhibitor I13 (potato type I serine protease inhibitor) family.

The protein resides in the secreted. The chain is Ethylene-responsive proteinase inhibitor 1 from Solanum lycopersicum (Tomato).